We begin with the raw amino-acid sequence, 182 residues long: Isopentenyl-diphosphate Delta-isomerase (182 aa).

2 residues coordinate Mn(2+): His-23 and His-30. The 135-residue stretch at 28–162 (PRHLAFSCHV…PWAFSPWLVE (135 aa)) folds into the Nudix hydrolase domain. Cys-65 is an active-site residue. Residue Cys-65 coordinates Mg(2+). His-67 is a binding site for Mn(2+). Glu-85 is a binding site for Mg(2+). Mn(2+)-binding residues include Glu-112 and Glu-114. Residue Glu-114 is part of the active site.

The protein belongs to the IPP isomerase type 1 family. Requires Mg(2+) as cofactor. It depends on Mn(2+) as a cofactor.

It localises to the cytoplasm. It carries out the reaction isopentenyl diphosphate = dimethylallyl diphosphate. The protein operates within isoprenoid biosynthesis; dimethylallyl diphosphate biosynthesis; dimethylallyl diphosphate from isopentenyl diphosphate: step 1/1. Catalyzes the 1,3-allylic rearrangement of the homoallylic substrate isopentenyl (IPP) to its highly electrophilic allylic isomer, dimethylallyl diphosphate (DMAPP). The protein is Isopentenyl-diphosphate Delta-isomerase of Brevibacterium linens.